A 489-amino-acid chain; its full sequence is FK506-binding protein 4 (489 aa).

Disordered regions lie at residues 40–157 (PDET…GLEL) and 199–378 (GNYV…TTGT). Residues 66–88 (MDIDESDDDYEEDSEEDSDDEEI) are compositionally biased toward acidic residues. Over residues 93–109 (SDKEKARKLKEAAALKE) the composition is skewed to basic and acidic residues. 3 stretches are compositionally biased toward acidic residues: residues 110 to 125 (LEDE…DDEN), 143 to 157 (TDDD…GLEL), and 208 to 250 (GPSE…DELD). Composition is skewed to basic and acidic residues over residues 267–282 (APKL…RTAD), 292–303 (MMAKDGKAKGAD), and 328–353 (EQKK…EAKK). The span at 362–378 (QGPTPSGQKPGETTTGT) shows a compositional bias: polar residues. The region spanning 406–489 (VAMRYIGKLE…IFDVKLLEIK (84 aa)) is the PPIase FKBP-type domain.

It belongs to the FKBP-type PPIase family. FKBP3/4 subfamily. In terms of assembly, binds to histones H3 and H4.

The protein resides in the nucleus. The enzyme catalyses [protein]-peptidylproline (omega=180) = [protein]-peptidylproline (omega=0). Inhibited by both FK506 and rapamycin. Functionally, PPIase that acts as a histone chaperone. Histone proline isomerase that increases the rate of cis-trans isomerization at prolines on the histone H3 N-terminal tail. Proline isomerization influences H3 methylation thereby regulating gene expression. The polypeptide is FK506-binding protein 4 (fpr4) (Aspergillus fumigatus (strain ATCC MYA-4609 / CBS 101355 / FGSC A1100 / Af293) (Neosartorya fumigata)).